The chain runs to 880 residues: MASKQTPMMEQYQRVKDQYPDAFLFYRLGDFYEMFNEDAVKGAQLLELTLTSRSKSKDNSIPMCGVPHRAVDNYVDILIDKGYKVAICEQMEDPKTTKGMVKREVTRLVTPGTTMDLAGDAARQNNYLTALKQEQGGYNLAYADLSTGELKVTKVSNEAAAINELVNLQTREVVTEPEVSASLLDQLTKRNILRSTQGQVVNQAEVAYLSQDLTDAGQRDVVALLVSYLLTTQKRSLAHLQRAVAYQLSSFMKIDHRSKVNLELTTNLRSGKRQGTLAWLLDETKTAMGSRLLKQWLDRPLLDQAKIERRYDRVQELLDHYFERQNLQEELIKVYDLERLAGRVAYGSVNGRDLIQLKTSLEQVPKIKYILQTLDVPAFDDLEQALDPLEDVAGLIDRAIAPEPPISVTDGGVIRDGYNHQLDEYRGAMQNGKQWIADLQEQERRATGINNLKIGYNHVFGYYIEVTKANIDKLPADRYERKQTLVNAERFATPELKEKESLILGAQDKSTALEYELFVKVREAVKEQIDRLQKLAANLAALDVIQAFAKVAEDYHFVRPSLNHDHQLQIEDGRHPVVEKFMGHQEYVPNDVLMGGDTSILLITGPNMSGKSTYMRQLALTAVMAQMGCFVPAKRAQLPIFDQIFTRIGAADDLVSGESTFMVEMMEANNALQNATADSLILFDEIGRGTATYDGMALAQAIIEFVHNRVGAKTLFSTHYHELTALEGELDHLQNVHVGATEENGELVFLHKVTPGPADKSYGIHVAKLAGMPTPLLTRANQILTSLEGQETAAVPSRGVEPPAPVIEPTPAKEQTPVKEQTTPLVEESSGQLELFATAPVEKKDGKADKLARQVKNLDLMSMTPMDVMNQVYKWQQNLK.

605–612 (GPNMSGKS) contacts ATP. A disordered region spans residues 790–829 (QETAAVPSRGVEPPAPVIEPTPAKEQTPVKEQTTPLVEES). The span at 818 to 829 (VKEQTTPLVEES) shows a compositional bias: polar residues.

It belongs to the DNA mismatch repair MutS family.

Functionally, this protein is involved in the repair of mismatches in DNA. It is possible that it carries out the mismatch recognition step. This protein has a weak ATPase activity. This chain is DNA mismatch repair protein MutS, found in Limosilactobacillus fermentum (strain NBRC 3956 / LMG 18251) (Lactobacillus fermentum).